A 623-amino-acid polypeptide reads, in one-letter code: Glutathione import ATP-binding protein GsiA (623 aa).

2 ABC transporter domains span residues 15-269 (VENL…RALL) and 314-564 (LRVR…RKLL). Residues 49 to 56 (GESGSGKS) and 357 to 364 (GESGSGKS) contribute to the ATP site.

This sequence belongs to the ABC transporter superfamily. Glutathione importer (TC 3.A.1.5.11) family. The complex is composed of two ATP-binding proteins (GsiA), two transmembrane proteins (GsiC and GsiD) and a solute-binding protein (GsiB).

It localises to the cell inner membrane. The enzyme catalyses glutathione(out) + ATP + H2O = glutathione(in) + ADP + phosphate + H(+). Its function is as follows. Part of the ABC transporter complex GsiABCD involved in glutathione import. Responsible for energy coupling to the transport system. In Shigella sonnei (strain Ss046), this protein is Glutathione import ATP-binding protein GsiA.